The primary structure comprises 324 residues: Bile salt hydrolase/transferase (324 aa).

Cys2 (nucleophile; acyl-thioester intermediate) is an active-site residue. Cys2 and Arg16 together coordinate deoxycholate. Asn79 lines the taurine pocket.

It belongs to the peptidase C59 family. As to quaternary structure, homotetramer. The tetramer consists of a dimer of dimers.

It carries out the reaction glycocholate + H2O = cholate + glycine. It catalyses the reaction glycodeoxycholate + H2O = deoxycholate + glycine. The enzyme catalyses chenodeoxycholate + glycine = glycochenodeoxycholate + H2O. The catalysed reaction is cholate + taurine = taurocholate + H2O. It carries out the reaction taurodeoxycholate + H2O = deoxycholate + taurine. It catalyses the reaction taurochenodeoxycholate + H2O = chenodeoxycholate + taurine. The enzyme catalyses an L-alpha-amino acid + cholate = an N-choloyl-L-alpha-amino acid + H2O. The catalysed reaction is an L-alpha-amino acid + taurocholate = an N-choloyl-L-alpha-amino acid + taurine. It carries out the reaction glycocholate + an L-alpha-amino acid = an N-choloyl-L-alpha-amino acid + glycine. The protein operates within lipid metabolism; bile acid biosynthesis. Functionally, possesses dual functions in bile acid metabolism. Acts as a bile salt hydrolase that catalyzes the deconjugation of glycine- and taurine-linked bile salts, which occurs naturally in the intestines of animals, releasing amino acid residues and deconjugated bile salts (bile acids). Can hydrolyze the amide bond in the bile salts glycocholate (GCA), glycodeoxycholate (GDCA), glycochenodeoxycholate (GCDCA), taurocholate (TCA), taurodeoxycholate (TDCA) and taurochenodeoxycholate (TCDCA). Shows a preference for glycine-conjugated bile acids as substrates. Also acts as an amine N-acyltransferase that conjugates a wide variety of amino acids to conjugated and non-conjugated bile acids, thus producing bacterial bile acid amidates (BBAAs) - also named microbially conjugated bile acids (MCBAs) - in the gastrointestinal tract. These BBAAs may facilitate communication between the microbiota and host through the activation of host ligand-activated transcription factors. This Lactiplantibacillus plantarum (strain ATCC BAA-793 / NCIMB 8826 / WCFS1) (Lactobacillus plantarum) protein is Bile salt hydrolase/transferase.